Reading from the N-terminus, the 372-residue chain is Lung adenoma susceptibility protein 2 (372 aa).

Positions 1–31 (MAKSKTKHRLCSQESSVSALLASCTLSGSNS) are cleaved as a signal peptide. S161 is modified (phosphoserine). The disordered stretch occupies residues 248–268 (KSPVPVNSDDSPQQTSRAKSA). The span at 255-265 (SDDSPQQTSRA) shows a compositional bias: polar residues.

Its subcellular location is the secreted. Might play a role in cell proliferation. The sequence is that of Lung adenoma susceptibility protein 2 (LAS2) from Homo sapiens (Human).